The chain runs to 273 residues: NH(3)-dependent NAD(+) synthetase (273 aa).

An ATP-binding site is contributed by 46–53; that stretch reads GISGGQDS. Residue Asp52 coordinates Mg(2+). Arg139 contributes to the deamido-NAD(+) binding site. Residue Thr159 coordinates ATP. Residue Glu164 participates in Mg(2+) binding. Lys172 and Asp179 together coordinate deamido-NAD(+). ATP-binding residues include Lys188 and Thr210. Residue 259–260 participates in deamido-NAD(+) binding; sequence HK.

This sequence belongs to the NAD synthetase family. In terms of assembly, homodimer.

It carries out the reaction deamido-NAD(+) + NH4(+) + ATP = AMP + diphosphate + NAD(+) + H(+). It participates in cofactor biosynthesis; NAD(+) biosynthesis; NAD(+) from deamido-NAD(+) (ammonia route): step 1/1. Its function is as follows. Catalyzes the ATP-dependent amidation of deamido-NAD to form NAD. Uses ammonia as a nitrogen source. This chain is NH(3)-dependent NAD(+) synthetase, found in Streptococcus agalactiae serotype Ia (strain ATCC 27591 / A909 / CDC SS700).